Reading from the N-terminus, the 619-residue chain is Magnesium-chelatase 67 kDa subunit (619 aa).

Ser-33–Ser-40 serves as a coordination point for ATP. Positions Thr-273–Glu-321 are disordered. Over residues Pro-280–Glu-321 the composition is skewed to acidic residues. One can recognise a VWFA domain in the interval Leu-431–Ser-619.

It belongs to the Mg-chelatase subunits D/I family.

It catalyses the reaction protoporphyrin IX + Mg(2+) + ATP + H2O = Mg-protoporphyrin IX + ADP + phosphate + 3 H(+). It functions in the pathway porphyrin-containing compound metabolism; bacteriochlorophyll biosynthesis. In terms of biological role, involved in bacteriochlorophyll biosynthesis; introduces a magnesium ion into protoporphyrin IX to yield Mg-protoporphyrin IX. This chain is Magnesium-chelatase 67 kDa subunit (bchD), found in Chlorobaculum parvum (strain DSM 263 / NCIMB 8327) (Chlorobium vibrioforme subsp. thiosulfatophilum).